The following is a 115-amino-acid chain: Superoxide reductase (115 aa).

E14, H16, H41, H47, C102, and H105 together coordinate Fe cation.

Belongs to the desulfoferrodoxin family. As to quaternary structure, homotetramer. Requires Fe cation as cofactor.

It carries out the reaction reduced [rubredoxin] + superoxide + 2 H(+) = oxidized [rubredoxin] + H2O2. In terms of biological role, uses electrons from reduced NADP, by way of rubredoxin and an oxidoreductase, to catalyze the reduction of superoxide to hydrogen peroxide. The sequence is that of Superoxide reductase (sorA) from Pyrococcus abyssi (strain GE5 / Orsay).